Here is a 555-residue protein sequence, read N- to C-terminus: Glypican-6 (555 aa).

Residues 1-23 form the signal peptide; sequence MPSWIGAVILPLLGLLLSLPAGA. The span at 348 to 357 shows a compositional bias: low complexity; it reads PALRSARSAP. Residues 348 to 376 form a disordered region; the sequence is PALRSARSAPENFNTRFRPYNPEERPTTA. A lipid anchor (GPI-anchor amidated serine) is attached at serine 529. Residues 530 to 555 constitute a propeptide, removed in mature form; it reads SAAQRGHSLLSWSLTCIVLALQRLCR.

This sequence belongs to the glypican family.

It is found in the cell membrane. Its subcellular location is the secreted. The protein localises to the extracellular space. Cell surface proteoglycan that bears heparan sulfate. Putative cell surface coreceptor for growth factors, extracellular matrix proteins, proteases and anti-proteases. Enhances migration and invasion of cancer cells through WNT5A signaling. The polypeptide is Glypican-6 (GPC6) (Pongo abelii (Sumatran orangutan)).